Here is a 120-residue protein sequence, read N- to C-terminus: SPbeta prophage-derived uncharacterized protein YosG (120 aa).

In Bacillus subtilis (strain 168), this protein is SPbeta prophage-derived uncharacterized protein YosG (yosG).